Reading from the N-terminus, the 200-residue chain is Holliday junction resolvase RecU (200 aa).

The interval 1-24 (MTIRYPNGKRYDQASQPHKTPIKK) is disordered. Mg(2+) contacts are provided by Thr85, Asp87, Glu100, and Gln119.

Belongs to the RecU family. The cofactor is Mg(2+).

It is found in the cytoplasm. The enzyme catalyses Endonucleolytic cleavage at a junction such as a reciprocal single-stranded crossover between two homologous DNA duplexes (Holliday junction).. Endonuclease that resolves Holliday junction intermediates in genetic recombination. Cleaves mobile four-strand junctions by introducing symmetrical nicks in paired strands. Promotes annealing of linear ssDNA with homologous dsDNA. Required for DNA repair, homologous recombination and chromosome segregation. This chain is Holliday junction resolvase RecU, found in Bacillus mycoides (strain KBAB4) (Bacillus weihenstephanensis).